The following is a 163-amino-acid chain: Nucleotide-binding protein HSM_1099 (163 aa).

It belongs to the YajQ family.

Functionally, nucleotide-binding protein. This is Nucleotide-binding protein HSM_1099 from Histophilus somni (strain 2336) (Haemophilus somnus).